The chain runs to 90 residues: MSRTIYCTFLKREAEGQDFQFYPGELGKRIYDNISKEAWTQWQTKQTMLINEKKISMMNVADRKVLEQEMINFLFEGQDVHIQGYTPPSE.

Belongs to the Fe(2+)-trafficking protein family. Monomer.

Its function is as follows. Could be a mediator in iron transactions between iron acquisition and iron-requiring processes, such as synthesis and/or repair of Fe-S clusters in biosynthetic enzymes. This is Probable Fe(2+)-trafficking protein from Sodalis glossinidius (strain morsitans).